Consider the following 132-residue polypeptide: EF-hand calcium-binding domain-containing protein 10 (132 aa).

EF-hand domains follow at residues 64–99 and 120–132; these read MDNS…LGLC and EMNK…WSMF.

The chain is EF-hand calcium-binding domain-containing protein 10 (Efcab10) from Mus musculus (Mouse).